The sequence spans 120 residues: Small ribosomal subunit protein uS13 (120 aa).

Residues 93 to 120 are disordered; sequence GLPVRGQNTKNNARTRKGPRRTVANKKK. The segment covering 105 to 120 has biased composition (basic residues); it reads ARTRKGPRRTVANKKK.

The protein belongs to the universal ribosomal protein uS13 family. Part of the 30S ribosomal subunit. Has been shown to cross-link to S19 forming a loose heterodimer. Forms two bridges to the 50S subunit in the 70S ribosome.

Located at the top of the head of the 30S subunit, it contacts several helices of the 16S rRNA. In the 70S ribosome it contacts the 23S rRNA (bridge B1a) and protein L5 of the 50S subunit (bridge B1b), connecting the 2 subunits; these bridges are implicated in subunit movement. Contacts the tRNA in the A and P-sites. This is Small ribosomal subunit protein uS13 (rpsM) from Geobacillus stearothermophilus (Bacillus stearothermophilus).